The primary structure comprises 273 residues: Nitrogenase iron protein (273 aa).

8 to 15 (GKGGIGKS) provides a ligand contact to ATP. A [4Fe-4S] cluster-binding site is contributed by Cys95. Arg98 bears the ADP-ribosylarginine; by dinitrogenase reductase ADP-ribosyltransferase mark. Cys130 lines the [4Fe-4S] cluster pocket.

The protein belongs to the NifH/BchL/ChlL family. In terms of assembly, homodimer. It depends on [4Fe-4S] cluster as a cofactor. In terms of processing, the reversible ADP-ribosylation of Arg-98 inactivates the nitrogenase reductase and regulates nitrogenase activity.

The catalysed reaction is N2 + 8 reduced [2Fe-2S]-[ferredoxin] + 16 ATP + 16 H2O = H2 + 8 oxidized [2Fe-2S]-[ferredoxin] + 2 NH4(+) + 16 ADP + 16 phosphate + 6 H(+). Its function is as follows. The key enzymatic reactions in nitrogen fixation are catalyzed by the nitrogenase complex, which has 2 components: the iron protein and the molybdenum-iron protein. This is Nitrogenase iron protein from Methanosarcina mazei (strain ATCC BAA-159 / DSM 3647 / Goe1 / Go1 / JCM 11833 / OCM 88) (Methanosarcina frisia).